The primary structure comprises 1127 residues: DNA-directed RNA polymerase I subunit RPA2 homolog (1127 aa).

A Phosphoserine modification is found at Ser-1025.

The protein belongs to the RNA polymerase beta chain family. Component of the RNA polymerase I (Pol I) complex consisting of at least 13 subunits.

It localises to the nucleus. The protein resides in the nucleolus. It catalyses the reaction RNA(n) + a ribonucleoside 5'-triphosphate = RNA(n+1) + diphosphate. With respect to regulation, antisense ribosomal siRNAs silence rRNA expression during the elongation phase by decreasing rpoa-2 occupancy downstream of the RNAi-targeted region in nrde-2-dependent manner. DNA-dependent RNA polymerase catalyzes the transcription of DNA into RNA using the four ribonucleoside triphosphates as substrates. Second largest core component of RNA polymerase I which synthesizes ribosomal RNA precursors. Proposed to contribute to the polymerase catalytic activity and forms the polymerase active center together with the largest subunit. Pol I is composed of mobile elements and RPA2 is part of the core element with the central large cleft and probably a clamp element that moves to open and close the cleft. Specifically binds to 18S, 5.8S and 26S rDNA, but not to 5S rDNA. The polypeptide is DNA-directed RNA polymerase I subunit RPA2 homolog (Caenorhabditis elegans).